A 407-amino-acid chain; its full sequence is Nicotinate phosphoribosyltransferase (407 aa).

At His228 the chain carries Phosphohistidine; by autocatalysis.

This sequence belongs to the NAPRTase family. In terms of processing, transiently phosphorylated on a His residue during the reaction cycle. Phosphorylation strongly increases the affinity for substrates and increases the rate of nicotinate D-ribonucleotide production. Dephosphorylation regenerates the low-affinity form of the enzyme, leading to product release.

The enzyme catalyses nicotinate + 5-phospho-alpha-D-ribose 1-diphosphate + ATP + H2O = nicotinate beta-D-ribonucleotide + ADP + phosphate + diphosphate. It participates in cofactor biosynthesis; NAD(+) biosynthesis; nicotinate D-ribonucleotide from nicotinate: step 1/1. Its activity is regulated as follows. 100-fold more active in the presence of saturating ATP. In terms of biological role, catalyzes the synthesis of beta-nicotinate D-ribonucleotide from nicotinate and 5-phospho-D-ribose 1-phosphate at the expense of ATP. Functions in the deamidating salvage pathway for production of NAD from nicotinamide. Displays a strict preference for nicotinate over nicotinamide substrate. The chain is Nicotinate phosphoribosyltransferase from Acinetobacter baylyi (strain ATCC 33305 / BD413 / ADP1).